A 225-amino-acid polypeptide reads, in one-letter code: MTIKAILTDIEGTTSAVSFVFDVLFPYAARHLPDFVREHAGEPEVAAQLAAVRAESGEADADVERAIAILLQWIAEDRKATPLKALQGMVWAQGYRDGQLKGHVYPDAVQALREWKARGLDLYVYSSGSIQAQKLIFGCSEAGDLGPLFSGYFDTTSGPKRESASYARIAGAIGLPAAEILFLSDVVQELDAARDAGMRTLGLAREGGSLDGHPTVASFADIVVE.

It belongs to the HAD-like hydrolase superfamily. MasA/MtnC family. In terms of assembly, monomer. It depends on Mg(2+) as a cofactor.

The enzyme catalyses 5-methylsulfanyl-2,3-dioxopentyl phosphate + H2O = 1,2-dihydroxy-5-(methylsulfanyl)pent-1-en-3-one + phosphate. It participates in amino-acid biosynthesis; L-methionine biosynthesis via salvage pathway; L-methionine from S-methyl-5-thio-alpha-D-ribose 1-phosphate: step 3/6. It functions in the pathway amino-acid biosynthesis; L-methionine biosynthesis via salvage pathway; L-methionine from S-methyl-5-thio-alpha-D-ribose 1-phosphate: step 4/6. Functionally, bifunctional enzyme that catalyzes the enolization of 2,3-diketo-5-methylthiopentyl-1-phosphate (DK-MTP-1-P) into the intermediate 2-hydroxy-3-keto-5-methylthiopentenyl-1-phosphate (HK-MTPenyl-1-P), which is then dephosphorylated to form the acireductone 1,2-dihydroxy-3-keto-5-methylthiopentene (DHK-MTPene). The sequence is that of Enolase-phosphatase E1 from Pseudomonas aeruginosa (strain UCBPP-PA14).